A 235-amino-acid polypeptide reads, in one-letter code: Probable tetraspanin tspA (235 aa).

Residues 1–18 are Cytoplasmic-facing; it reads MVDTSNLLPQTPRLLKVP. The chain crosses the membrane as a helical span at residues 19-39; it reads LIILNIILWILGLVLVIVGGI. Residues 40–68 lie on the Extracellular side of the membrane; it reads CVSFLSNFKDFTKASDAKSALSNLTTSIP. A glycan (N-linked (GlcNAc...) asparagine) is linked at Asn-62. Residues 69-89 traverse the membrane as a helical segment; it reads AGVLVIGILFVIFTVVGCFVA. Residues 90–93 lie on the Cytoplasmic side of the membrane; that stretch reads YKEK. The helical transmembrane segment at 94–114 threads the bilayer; sequence LVGLVIYCAVMLILLVILIGV. Over 115–200 the chain is Extracellular; the sequence is GGKAITLHND…FSSKIYAVGA (86 aa). 3 N-linked (GlcNAc...) asparagine glycosylation sites follow: Asn-139, Asn-143, and Asn-160. Residues 201–221 form a helical membrane-spanning segment; sequence AGLAIGIIELVAILFSLFLII. Over 222–235 the chain is Cytoplasmic; the sequence is RICRSPRTRSYDQY.

Belongs to the tetraspanin (TM4SF) family.

Its subcellular location is the membrane. The chain is Probable tetraspanin tspA (tspA) from Dictyostelium discoideum (Social amoeba).